Here is a 249-residue protein sequence, read N- to C-terminus: Putative nicotinamide mononucleotide adenylyltransferase (249 aa).

NAD(+)-binding residues include serine 40 and phenylalanine 41. Position 48 (histidine 48) interacts with ATP. The NAD(+) site is built by threonine 97, glycine 129, aspartate 131, arginine 165, and asparagine 206. 214–217 (TRAR) lines the ATP pocket.

The protein belongs to the eukaryotic NMN adenylyltransferase family. POF1 subfamily.

It localises to the cytoplasm. The protein localises to the nucleus. It carries out the reaction beta-nicotinamide D-ribonucleotide + ATP + H(+) = diphosphate + NAD(+). It participates in cofactor biosynthesis; NAD(+) biosynthesis; NAD(+) from nicotinamide D-ribonucleotide: step 1/1. In terms of biological role, catalyzes the formation of NAD(+) from nicotinamide mononucleotide (NMN) and ATP. Involved in the salvage pathway for NAD(+) biosynthesis via NMN. This chain is Putative nicotinamide mononucleotide adenylyltransferase, found in Schizosaccharomyces pombe (strain 972 / ATCC 24843) (Fission yeast).